Consider the following 392-residue polypeptide: DNA-directed RNA polymerase subunit Rpo1C (392 aa).

The protein belongs to the RNA polymerase beta' chain family. As to quaternary structure, part of the RNA polymerase complex.

Its subcellular location is the cytoplasm. It catalyses the reaction RNA(n) + a ribonucleoside 5'-triphosphate = RNA(n+1) + diphosphate. Functionally, DNA-dependent RNA polymerase (RNAP) catalyzes the transcription of DNA into RNA using the four ribonucleoside triphosphates as substrates. Forms part of the jaw domain. This Sulfurisphaera tokodaii (strain DSM 16993 / JCM 10545 / NBRC 100140 / 7) (Sulfolobus tokodaii) protein is DNA-directed RNA polymerase subunit Rpo1C.